Reading from the N-terminus, the 199-residue chain is Large ribosomal subunit protein uL4 (199 aa).

The protein belongs to the universal ribosomal protein uL4 family. As to quaternary structure, part of the 50S ribosomal subunit.

Its function is as follows. One of the primary rRNA binding proteins, this protein initially binds near the 5'-end of the 23S rRNA. It is important during the early stages of 50S assembly. It makes multiple contacts with different domains of the 23S rRNA in the assembled 50S subunit and ribosome. In terms of biological role, forms part of the polypeptide exit tunnel. The sequence is that of Large ribosomal subunit protein uL4 from Aquifex pyrophilus.